We begin with the raw amino-acid sequence, 282 residues long: MSPKKSPFFELRSGSVDTLLFVVKTTDLEAMRAELTRRFEATPEFFANDVVAIDVRRLAGNERVALADIAQLLDSVRMRPVGVVADAQQAWAAESALPLLEARDRRGAAARSADEESANAAAAAPAATAATATPPADLFESVAGTPESGTPATAAAVEPAPAAEPVRLATSSQTMVVDKPLRSGQRIYAKGDLVVLGLVSYGAEVIAEGNIHIYAPLRGRALAGVQGNHDARIFCTCLEPELISIAGIYRTTENPLPADVLGKPVQIWLEEEKLMIEPLRLT.

Residues 108-127 form a disordered region; the sequence is AAARSADEESANAAAAAPAA. Positions 118 to 127 are enriched in low complexity; the sequence is ANAAAAAPAA.

The protein belongs to the MinC family. As to quaternary structure, interacts with MinD and FtsZ.

Its function is as follows. Cell division inhibitor that blocks the formation of polar Z ring septums. Rapidly oscillates between the poles of the cell to destabilize FtsZ filaments that have formed before they mature into polar Z rings. Prevents FtsZ polymerization. This Paraburkholderia xenovorans (strain LB400) protein is Probable septum site-determining protein MinC.